A 187-amino-acid chain; its full sequence is Peptidyl-tRNA hydrolase (187 aa).

Residue Y14 participates in tRNA binding. H19 serves as the catalytic Proton acceptor. TRNA-binding residues include Y64 and N66.

Belongs to the PTH family. Monomer.

Its subcellular location is the cytoplasm. It catalyses the reaction an N-acyl-L-alpha-aminoacyl-tRNA + H2O = an N-acyl-L-amino acid + a tRNA + H(+). Its function is as follows. Hydrolyzes ribosome-free peptidyl-tRNAs (with 1 or more amino acids incorporated), which drop off the ribosome during protein synthesis, or as a result of ribosome stalling. In terms of biological role, catalyzes the release of premature peptidyl moieties from peptidyl-tRNA molecules trapped in stalled 50S ribosomal subunits, and thus maintains levels of free tRNAs and 50S ribosomes. This chain is Peptidyl-tRNA hydrolase, found in Carboxydothermus hydrogenoformans (strain ATCC BAA-161 / DSM 6008 / Z-2901).